Here is a 90-residue protein sequence, read N- to C-terminus: Putative regulatory protein Dred_1699 (90 aa).

It belongs to the RemA family.

This chain is Putative regulatory protein Dred_1699, found in Desulforamulus reducens (strain ATCC BAA-1160 / DSM 100696 / MI-1) (Desulfotomaculum reducens).